Consider the following 244-residue polypeptide: MKIEKKTALVTGANQGLGKEIAIKLSQKGIQVIGTSTTVDGVKTINKYLKKNGFGFILDLKDTDSILEKMKEICQKKYSIDILINNAGITSDNLLVYMSNKEWENVIKINLTSVFYMSKSVIRSMIKKRYGRIVTIGSVIGYLGNRGQINYSASKSGLIGFHKSLALEVAQKGITVNIVSPGFIKTNLTKNLNVFQYKKHLSKIPMKRIGTAEEIANAVIFLSSEKASYITGQTIHVNGGMYMT.

Residues 12 to 15 (GANQ) and threonine 37 contribute to the NADP(+) site. Ca(2+) contacts are provided by lysine 50 and glycine 53. NADP(+) is bound by residues 59 to 60 (DL) and asparagine 86. Serine 138 serves as a coordination point for substrate. Asparagine 145 lines the Ca(2+) pocket. Tyrosine 151 acts as the Proton acceptor in catalysis. Residues 151–155 (YSASK) and isoleucine 184 each bind NADP(+). The Ca(2+) site is built by glutamine 233 and threonine 234.

This sequence belongs to the short-chain dehydrogenases/reductases (SDR) family. In terms of assembly, homotetramer.

The catalysed reaction is a (3R)-hydroxyacyl-[ACP] + NADP(+) = a 3-oxoacyl-[ACP] + NADPH + H(+). It functions in the pathway lipid metabolism; fatty acid biosynthesis. Its function is as follows. Catalyzes the NADPH-dependent reduction of beta-ketoacyl-ACP substrates to beta-hydroxyacyl-ACP products, the first reductive step in the elongation cycle of fatty acid biosynthesis. This chain is 3-oxoacyl-[acyl-carrier-protein] reductase FabG (fabG), found in Buchnera aphidicola subsp. Schizaphis graminum (strain Sg).